A 268-amino-acid polypeptide reads, in one-letter code: Energy-coupling factor transporter transmembrane protein EcfT (268 aa).

6 helical membrane passes run 26 to 46, 47 to 67, 73 to 93, 116 to 136, 151 to 171, and 246 to 266; these read ILAV…LSYG, ILIG…GLLL, LWII…GEAL, LVLL…IVLT, VPAH…PTLL, and ALTG…RWGI.

Belongs to the energy-coupling factor EcfT family. As to quaternary structure, forms a stable energy-coupling factor (ECF) transporter complex composed of 2 membrane-embedded substrate-binding proteins (S component), 2 ATP-binding proteins (A component) and 2 transmembrane proteins (T component). May be able to interact with more than 1 S component at a time.

Its subcellular location is the cell membrane. Functionally, transmembrane (T) component of an energy-coupling factor (ECF) ABC-transporter complex. Unlike classic ABC transporters this ECF transporter provides the energy necessary to transport a number of different substrates. The polypeptide is Energy-coupling factor transporter transmembrane protein EcfT (Acidaminococcus fermentans (strain ATCC 25085 / DSM 20731 / CCUG 9996 / CIP 106432 / VR4)).